A 482-amino-acid chain; its full sequence is Chromosomal replication initiator protein DnaA (482 aa).

The tract at residues 1–71 (MKQSILFERV…TGLFQAEDPE (71 aa)) is domain I, interacts with DnaA modulators. Residues 71–139 (EILKIEVLVR…ASFGSPLFGS (69 aa)) form a domain II region. The tract at residues 140 to 362 (PLDSRFTFDT…GAFNQLVFRR (223 aa)) is domain III, AAA+ region. Gly186, Gly188, Lys189, and Thr190 together coordinate ATP. A domain IV, binds dsDNA region spans residues 363-482 (SFEPNLSIER…VELLKRLINE (120 aa)).

Belongs to the DnaA family. As to quaternary structure, oligomerizes as a right-handed, spiral filament on DNA at oriC.

The protein localises to the cytoplasm. Plays an essential role in the initiation and regulation of chromosomal replication. ATP-DnaA binds to the origin of replication (oriC) to initiate formation of the DNA replication initiation complex once per cell cycle. Binds the DnaA box (a 9 base pair repeat at the origin) and separates the double-stranded (ds)DNA. Forms a right-handed helical filament on oriC DNA; dsDNA binds to the exterior of the filament while single-stranded (ss)DNA is stabiized in the filament's interior. The ATP-DnaA-oriC complex binds and stabilizes one strand of the AT-rich DNA unwinding element (DUE), permitting loading of DNA polymerase. After initiation quickly degrades to an ADP-DnaA complex that is not apt for DNA replication. Binds acidic phospholipids. The protein is Chromosomal replication initiator protein DnaA of Rhizobium johnstonii (strain DSM 114642 / LMG 32736 / 3841) (Rhizobium leguminosarum bv. viciae).